The sequence spans 442 residues: MASKAKTGRDDEATSAVELTEATESAVARTDGDSTTDTASKLGHHSFLSRLYTGTGAFEVVGRRRLWFGVSGAIVAVAIASIVFRGFTFGIDFKGGTTVSFPRGSTQVAQVEDVYYRALGSEPQSVVIVGAGASATVQIRSETLTSDQTAKLRDALFEAFGPKGTDGQPSKQAISDSAVSETWGGQITKKAVIALVVFLVLVALYITVRYERYMTISAITAMLFDLTVTAGVYSLVGFEVTPATVIGLLTILGFSLYDTVIVFDKVEENTHGFQHTTRRTFAEQANLAINQTFMRSINTSLIGVLPVLALMVVAVWLLGVGTLKDLALVQLIGIIIGTYSSIFFATPLLVTLRERTELVRNHTRRVLKRRNSGSPAGSEDASTDGGEQPAAADEQSLVGITQASSQSAPRAAQGSSKPAPGARPVRPVGTRRPTGKRNAGRR.

Positions 1-39 are disordered; that stretch reads MASKAKTGRDDEATSAVELTEATESAVARTDGDSTTDTA. Transmembrane regions (helical) follow at residues 67–87, 187–207, 218–238, 243–263, 301–321, and 331–351; these read WFGV…FRGF, ITKK…LYIT, AITA…LVGF, ATVI…VIVF, LIGV…LGVG, and LIGI…LLVT. Positions 366-442 are disordered; it reads VLKRRNSGSP…PTGKRNAGRR (77 aa). Over residues 402–432 the composition is skewed to low complexity; sequence QASSQSAPRAAQGSSKPAPGARPVRPVGTRR. Over residues 433–442 the composition is skewed to basic residues; that stretch reads PTGKRNAGRR.

The protein belongs to the SecD/SecF family. SecF subfamily. As to quaternary structure, forms a complex with SecD. Part of the essential Sec protein translocation apparatus which comprises SecA, SecYEG and auxiliary proteins SecDF. Other proteins may also be involved.

Its subcellular location is the cell membrane. In terms of biological role, part of the Sec protein translocase complex. Interacts with the SecYEG preprotein conducting channel. SecDF uses the proton motive force (PMF) to complete protein translocation after the ATP-dependent function of SecA. This is Protein translocase subunit SecF from Mycobacterium tuberculosis (strain ATCC 25618 / H37Rv).